The sequence spans 339 residues: DNA-directed RNA polymerase subunit alpha (339 aa).

The tract at residues 1-233 (MVREEVAGST…DLFLPFLHAE (233 aa)) is alpha N-terminal domain (alpha-NTD). The tract at residues 264-339 (KKGIPLNCIF…IDLLKNKLSF (76 aa)) is alpha C-terminal domain (alpha-CTD).

It belongs to the RNA polymerase alpha chain family. As to quaternary structure, in plastids the minimal PEP RNA polymerase catalytic core is composed of four subunits: alpha, beta, beta', and beta''. When a (nuclear-encoded) sigma factor is associated with the core the holoenzyme is formed, which can initiate transcription.

It localises to the plastid. It is found in the chloroplast. It catalyses the reaction RNA(n) + a ribonucleoside 5'-triphosphate = RNA(n+1) + diphosphate. Its function is as follows. DNA-dependent RNA polymerase catalyzes the transcription of DNA into RNA using the four ribonucleoside triphosphates as substrates. This chain is DNA-directed RNA polymerase subunit alpha, found in Festucopsis festucoides.